Consider the following 124-residue polypeptide: Small ribosomal subunit protein uS12 (124 aa).

D89 is subject to 3-methylthioaspartic acid. Position 108 is an N6-acetyllysine (K108).

This sequence belongs to the universal ribosomal protein uS12 family. Part of the 30S ribosomal subunit. Contacts proteins S8 and S17. May interact with IF1 in the 30S initiation complex.

In terms of biological role, with S4 and S5 plays an important role in translational accuracy. Functionally, interacts with and stabilizes bases of the 16S rRNA that are involved in tRNA selection in the A site and with the mRNA backbone. Located at the interface of the 30S and 50S subunits, it traverses the body of the 30S subunit contacting proteins on the other side and probably holding the rRNA structure together. The combined cluster of proteins S8, S12 and S17 appears to hold together the shoulder and platform of the 30S subunit. The sequence is that of Small ribosomal subunit protein uS12 from Escherichia coli O139:H28 (strain E24377A / ETEC).